Reading from the N-terminus, the 318-residue chain is MSGAESYRHITVLLNEAVDALAVREDGVYVDGTFGRGGHSRLILSRLGDAGRLIVFDKDPQAIAVAEELARSDKRVGVVHGGFASFQTALDGLGIGKVDGALFDLGISSPQIDDGSRGFSFRFDAPLDMRMDTTRGMSAAEWIAVASEQDLHEVIKNYGEERFSRQIVRAIVAQRAESPIDTTRKLAQIVAQNVRTRERGQDPATRTFQAIRIFINRELEEVGAVLPQVMCRLKEGGRLAVIAFHSLEDRIVKQFVKKYSQHEPLPSWAAVREADLPEPPLKIVGRALKPGEAEIAANPRARSAVLRVAERTAGPIPE.

S-adenosyl-L-methionine-binding positions include 37–39 (GGH), Asp-57, Phe-83, Asp-104, and Gln-111.

It belongs to the methyltransferase superfamily. RsmH family.

It is found in the cytoplasm. The catalysed reaction is cytidine(1402) in 16S rRNA + S-adenosyl-L-methionine = N(4)-methylcytidine(1402) in 16S rRNA + S-adenosyl-L-homocysteine + H(+). In terms of biological role, specifically methylates the N4 position of cytidine in position 1402 (C1402) of 16S rRNA. This is Ribosomal RNA small subunit methyltransferase H from Neisseria gonorrhoeae (strain NCCP11945).